A 689-amino-acid polypeptide reads, in one-letter code: Glycine--tRNA ligase beta subunit (689 aa).

This sequence belongs to the class-II aminoacyl-tRNA synthetase family. Tetramer of two alpha and two beta subunits.

Its subcellular location is the cytoplasm. It catalyses the reaction tRNA(Gly) + glycine + ATP = glycyl-tRNA(Gly) + AMP + diphosphate. The protein is Glycine--tRNA ligase beta subunit of Escherichia coli O8 (strain IAI1).